The chain runs to 393 residues: Isocitrate dehydrogenase [NADP] (393 aa).

5 residues coordinate D-threo-isocitrate: S102, N104, R108, R118, and R142. D283 contributes to the Mg(2+) binding site.

The protein belongs to the isocitrate and isopropylmalate dehydrogenases family. As to quaternary structure, homodimer. The cofactor is Mg(2+). Mn(2+) is required as a cofactor.

The catalysed reaction is D-threo-isocitrate + NADP(+) = 2-oxoglutarate + CO2 + NADPH. Its function is as follows. Catalyzes the oxidative decarboxylation of isocitrate to 2-oxoglutarate and carbon dioxide with the concomitant reduction of NADP(+). This chain is Isocitrate dehydrogenase [NADP] (icd), found in Streptococcus mutans serotype c (strain ATCC 700610 / UA159).